The chain runs to 439 residues: Phosphomethylpyrimidine synthase (439 aa).

Substrate is bound by residues Asn-67, Met-96, Tyr-126, His-165, 187–189, 228–231, and Glu-267; these read SRG and DSLR. Residue His-271 participates in Zn(2+) binding. Tyr-294 contributes to the substrate binding site. His-335 contributes to the Zn(2+) binding site. Residues Cys-411, Cys-414, and Cys-418 each contribute to the [4Fe-4S] cluster site.

Belongs to the ThiC family. [4Fe-4S] cluster is required as a cofactor.

It catalyses the reaction 5-amino-1-(5-phospho-beta-D-ribosyl)imidazole + S-adenosyl-L-methionine = 4-amino-2-methyl-5-(phosphooxymethyl)pyrimidine + CO + 5'-deoxyadenosine + formate + L-methionine + 3 H(+). Its pathway is cofactor biosynthesis; thiamine diphosphate biosynthesis. Its function is as follows. Catalyzes the synthesis of the hydroxymethylpyrimidine phosphate (HMP-P) moiety of thiamine from aminoimidazole ribotide (AIR) in a radical S-adenosyl-L-methionine (SAM)-dependent reaction. The protein is Phosphomethylpyrimidine synthase of Ignicoccus hospitalis (strain KIN4/I / DSM 18386 / JCM 14125).